We begin with the raw amino-acid sequence, 114 residues long: UPF0145 protein TT_C1581 (114 aa).

It belongs to the UPF0145 family.

This chain is UPF0145 protein TT_C1581, found in Thermus thermophilus (strain ATCC BAA-163 / DSM 7039 / HB27).